Consider the following 131-residue polypeptide: Large ribosomal subunit protein bL17 (131 aa).

It belongs to the bacterial ribosomal protein bL17 family. As to quaternary structure, part of the 50S ribosomal subunit. Contacts protein L32.

This is Large ribosomal subunit protein bL17 from Thermotoga sp. (strain RQ2).